A 228-amino-acid chain; its full sequence is Sugar fermentation stimulation protein homolog (228 aa).

This sequence belongs to the SfsA family.

The polypeptide is Sugar fermentation stimulation protein homolog (Psychromonas ingrahamii (strain DSM 17664 / CCUG 51855 / 37)).